A 141-amino-acid polypeptide reads, in one-letter code: Single-stranded DNA-binding protein 2 (141 aa).

Residues 1 to 104 enclose the SSB domain; the sequence is MLNRTVLVGR…VVADSVQFLE (104 aa). A disordered region spans residues 104–141; sequence EPKNNNQQQNNNYQQQRQTQTGNNPFDNNADSIEDLPF. Residues 107–127 show a composition bias toward low complexity; sequence NNNQQQNNNYQQQRQTQTGNN.

In terms of assembly, homotetramer.

The protein is Single-stranded DNA-binding protein 2 (ssb-p) of Staphylococcus aureus (strain Mu50 / ATCC 700699).